The sequence spans 140 residues: Actin-depolymerizing factor 10 (140 aa).

Position 6 is a phosphoserine (Ser-6). Residues 7–139 (GMHVSDECKL…SLDIIKGRVN (133 aa)) enclose the ADF-H domain.

It belongs to the actin-binding proteins ADF family.

The protein resides in the cytoplasm. Its subcellular location is the cytoskeleton. Functionally, actin-depolymerizing protein. Severs actin filaments (F-actin) and binds to actin monomers. In Arabidopsis thaliana (Mouse-ear cress), this protein is Actin-depolymerizing factor 10 (ADF10).